We begin with the raw amino-acid sequence, 284 residues long: Acetyl-coenzyme A carboxylase carboxyl transferase subunit beta (284 aa).

Residues 25-284 (MWVKCPGCSA…ILGILYRPAA (260 aa)) form the CoA carboxyltransferase N-terminal domain. Zn(2+) is bound by residues Cys-29, Cys-32, Cys-48, and Cys-51. The C4-type zinc finger occupies 29–51 (CPGCSATLLAKDLDANLNVCPTC).

Belongs to the AccD/PCCB family. Acetyl-CoA carboxylase is a heterohexamer composed of biotin carboxyl carrier protein (AccB), biotin carboxylase (AccC) and two subunits each of ACCase subunit alpha (AccA) and ACCase subunit beta (AccD). Zn(2+) is required as a cofactor.

Its subcellular location is the cytoplasm. It carries out the reaction N(6)-carboxybiotinyl-L-lysyl-[protein] + acetyl-CoA = N(6)-biotinyl-L-lysyl-[protein] + malonyl-CoA. It functions in the pathway lipid metabolism; malonyl-CoA biosynthesis; malonyl-CoA from acetyl-CoA: step 1/1. In terms of biological role, component of the acetyl coenzyme A carboxylase (ACC) complex. Biotin carboxylase (BC) catalyzes the carboxylation of biotin on its carrier protein (BCCP) and then the CO(2) group is transferred by the transcarboxylase to acetyl-CoA to form malonyl-CoA. The sequence is that of Acetyl-coenzyme A carboxylase carboxyl transferase subunit beta from Pelobacter propionicus (strain DSM 2379 / NBRC 103807 / OttBd1).